Consider the following 489-residue polypeptide: Coronin-1B (489 aa).

A Phosphoserine; by PKC modification is found at serine 2. 6 WD repeats span residues 18-72, 73-122, 123-166, 167-210, 211-256, and 257-296; these read QPVK…GRID, KAYP…SPLT, EPVV…GTAE, ELYR…RGTL, VAER…ENLE, and EPMA…RYFE. Residues 408-444 are disordered; it reads RRNVLSDSRPAMAPGSSHLGAPASTTTAADATPSGSL. Low complexity predominate over residues 428–441; sequence APASTTTAADATPS. Residues 449-474 adopt a coiled-coil conformation; the sequence is EAGKLEEVMQELRALRALVKEQGDRI.

This sequence belongs to the WD repeat coronin family. Forms homooligomers, but does not form complexes with the other coronins. Interacts with Arp2/3 complex components, including ACTR2, ARPC1B and ARPC2. Binds actin. Post-translationally, phosphorylation by PKC on Ser-2 regulates the interaction with the Arp2/3 complex and cell motility in fibroblasts. Phosphorylation does not seem to affect subcellular location.

It is found in the cytoplasm. The protein localises to the cytoskeleton. It localises to the stress fiber. Its function is as follows. Regulates leading edge dynamics and cell motility in fibroblasts. May be involved in cytokinesis and signal transduction. In Homo sapiens (Human), this protein is Coronin-1B (CORO1B).